Consider the following 819-residue polypeptide: Transferrin 2 (819 aa).

An N-terminal signal peptide occupies residues 1 to 21; that stretch reads MASSLVFVALVGALCFTLANA. Residues 33-373 form the Transferrin-like 1 domain; the sequence is MVWCTKSQAE…QYDQYRSERL (341 aa). 2 disulfides stabilise this stretch: Cys36/Cys78 and Cys46/Cys69. Residues Asn48 and Asn66 are each glycosylated (N-linked (GlcNAc...) asparagine). Residues Asp93 and Tyr121 each coordinate Fe(3+). 3 cysteine pairs are disulfide-bonded: Cys147-Cys237, Cys190-Cys213, and Cys273-Cys287. Hydrogencarbonate contacts are provided by Ala155 and Gly156. N-linked (GlcNAc...) asparagine glycosylation occurs at Asn187. Residue Tyr231 coordinates Fe(3+). The interval 325–361 is disordered; sequence GTRDDQSRQGGQSFNSRNNINDQNAYGQFDNNDPYRT. Polar residues predominate over residues 332 to 361; sequence RQGGQSFNSRNNINDQNAYGQFDNNDPYRT. N-linked (GlcNAc...) asparagine glycosylation occurs at Asn388. The Transferrin-like 2 domain occupies 450–796; that stretch reads MTLCVTSENE…FMRARRITDC (347 aa). Intrachain disulfides connect Cys453-Cys490 and Cys463-Cys481. Fe(3+) contacts are provided by Asp505 and Tyr533. 4 disulfides stabilise this stretch: Cys557–Cys646, Cys599–Cys621, Cys618–Cys629, and Cys687–Cys701. Residues Thr559, Ala565, and Gly566 each coordinate hydrogencarbonate. N-linked (GlcNAc...) asparagine glycosylation is present at Asn720. Residue Cys796 is the site of GPI-anchor amidated cysteine attachment. Residues 797–819 constitute a propeptide, removed in mature form; the sequence is YAGASQLALSVGLLLVGSLVAML.

The protein belongs to the transferrin family. Forms a complex composed of septa junction proteins Nrx-IV/Nrx, Tsf2/MTf, Cont and Nrg during late embryogenesis.

It is found in the apicolateral cell membrane. Its subcellular location is the cell junction. The protein localises to the septate junction. Iron-binding protein and component of septate junctions that form the paracellular permeability barrier in epithelial tissues. In an iron-dependent manner, required for septate junction assembly during epithelial maturation in embryos and mature septa junctions stability. The polypeptide is Transferrin 2 (Drosophila melanogaster (Fruit fly)).